The following is a 125-amino-acid chain: Glycine cleavage system H protein (125 aa).

Residues 19-101 form the Lipoyl-binding domain; that stretch reads VGTVGISDYA…EGAAWFFKLT (83 aa). K60 carries the N6-lipoyllysine modification.

This sequence belongs to the GcvH family. In terms of assembly, the glycine cleavage system is composed of four proteins: P, T, L and H. (R)-lipoate serves as cofactor.

Its function is as follows. The glycine cleavage system catalyzes the degradation of glycine. The H protein shuttles the methylamine group of glycine from the P protein to the T protein. This Paramagnetospirillum magneticum (strain ATCC 700264 / AMB-1) (Magnetospirillum magneticum) protein is Glycine cleavage system H protein.